The chain runs to 146 residues: Large ribosomal subunit protein uL15 (146 aa).

A compositionally biased stretch (basic and acidic residues) spans 1 to 13 (MKLHELKPAEGSR). Positions 1 to 52 (MKLHELKPAEGSRKVRNRVGRGIGSGNGKTAGKGHKGQNARSGGGVRLGFEG) are disordered. 2 stretches are compositionally biased toward gly residues: residues 21-31 (RGIGSGNGKTA) and 42-52 (SGGGVRLGFEG).

This sequence belongs to the universal ribosomal protein uL15 family. In terms of assembly, part of the 50S ribosomal subunit.

Functionally, binds to the 23S rRNA. This chain is Large ribosomal subunit protein uL15, found in Bacillus anthracis (strain A0248).